We begin with the raw amino-acid sequence, 457 residues long: tRNA modification GTPase MnmE (457 aa).

(6S)-5-formyl-5,6,7,8-tetrahydrofolate-binding residues include Arg-22, Glu-85, and Arg-124. The TrmE-type G domain maps to 219–378; sequence GATVVIAGKP…LKEKIYDLVL (160 aa). Residue Asn-229 coordinates K(+). Residues 229-234, 248-254, 273-276, and 333-336 contribute to the GTP site; these read NTGKSS, TPVPGTT, DTAG, and NKAD. Residue Ser-233 coordinates Mg(2+). Residues Thr-248, Val-250, and Thr-253 each contribute to the K(+) site. Residue Thr-254 coordinates Mg(2+). Lys-457 serves as a coordination point for (6S)-5-formyl-5,6,7,8-tetrahydrofolate.

It belongs to the TRAFAC class TrmE-Era-EngA-EngB-Septin-like GTPase superfamily. TrmE GTPase family. Homodimer. Heterotetramer of two MnmE and two MnmG subunits. K(+) serves as cofactor.

The protein localises to the cytoplasm. Its function is as follows. Exhibits a very high intrinsic GTPase hydrolysis rate. Involved in the addition of a carboxymethylaminomethyl (cmnm) group at the wobble position (U34) of certain tRNAs, forming tRNA-cmnm(5)s(2)U34. The polypeptide is tRNA modification GTPase MnmE (Syntrophus aciditrophicus (strain SB)).